Consider the following 91-residue polypeptide: Putative regulatory protein Helmi_20580 (91 aa).

This sequence belongs to the RemA family.

The polypeptide is Putative regulatory protein Helmi_20580 (Heliobacterium modesticaldum (strain ATCC 51547 / Ice1)).